Here is a 356-residue protein sequence, read N- to C-terminus: Dual-specificity RNA methyltransferase RlmN (356 aa).

Residue glutamate 92 is the Proton acceptor of the active site. The region spanning 98–327 (EKNRGTLCIS…HQGIRTMTRR (230 aa)) is the Radical SAM core domain. Cysteine 105 and cysteine 337 form a disulfide bridge. [4Fe-4S] cluster is bound by residues cysteine 112, cysteine 116, and cysteine 119. S-adenosyl-L-methionine contacts are provided by residues 162–163 (GE), serine 194, 216–218 (SLH), and asparagine 294. Cysteine 337 functions as the S-methylcysteine intermediate in the catalytic mechanism.

Belongs to the radical SAM superfamily. RlmN family. Requires [4Fe-4S] cluster as cofactor.

It is found in the cytoplasm. The enzyme catalyses adenosine(2503) in 23S rRNA + 2 reduced [2Fe-2S]-[ferredoxin] + 2 S-adenosyl-L-methionine = 2-methyladenosine(2503) in 23S rRNA + 5'-deoxyadenosine + L-methionine + 2 oxidized [2Fe-2S]-[ferredoxin] + S-adenosyl-L-homocysteine. It carries out the reaction adenosine(37) in tRNA + 2 reduced [2Fe-2S]-[ferredoxin] + 2 S-adenosyl-L-methionine = 2-methyladenosine(37) in tRNA + 5'-deoxyadenosine + L-methionine + 2 oxidized [2Fe-2S]-[ferredoxin] + S-adenosyl-L-homocysteine. Specifically methylates position 2 of adenine 2503 in 23S rRNA and position 2 of adenine 37 in tRNAs. m2A2503 modification seems to play a crucial role in the proofreading step occurring at the peptidyl transferase center and thus would serve to optimize ribosomal fidelity. The chain is Dual-specificity RNA methyltransferase RlmN from Ruthia magnifica subsp. Calyptogena magnifica.